Here is a 294-residue protein sequence, read N- to C-terminus: Probable metallo-hydrolase BURPS1710b_2304 (294 aa).

A divalent metal cation is bound by residues His-68, His-70, Asp-72, His-73, His-143, Asp-170, and His-212.

This sequence belongs to the metallo-beta-lactamase superfamily. A divalent metal cation is required as a cofactor.

Its function is as follows. Probable hydrolase. Does not have beta-lactamase activity. This chain is Probable metallo-hydrolase BURPS1710b_2304, found in Burkholderia pseudomallei (strain 1710b).